An 81-amino-acid chain; its full sequence is ATP synthase subunit c, chloroplastic (81 aa).

Transmembrane regions (helical) follow at residues 3–23 (PLIS…ASIG) and 57–77 (LAFM…LLFA).

The protein belongs to the ATPase C chain family. As to quaternary structure, F-type ATPases have 2 components, F(1) - the catalytic core - and F(0) - the membrane proton channel. F(1) has five subunits: alpha(3), beta(3), gamma(1), delta(1), epsilon(1). F(0) has four main subunits: a(1), b(1), b'(1) and c(10-14). The alpha and beta chains form an alternating ring which encloses part of the gamma chain. F(1) is attached to F(0) by a central stalk formed by the gamma and epsilon chains, while a peripheral stalk is formed by the delta, b and b' chains.

Its subcellular location is the plastid. It is found in the chloroplast thylakoid membrane. F(1)F(0) ATP synthase produces ATP from ADP in the presence of a proton or sodium gradient. F-type ATPases consist of two structural domains, F(1) containing the extramembraneous catalytic core and F(0) containing the membrane proton channel, linked together by a central stalk and a peripheral stalk. During catalysis, ATP synthesis in the catalytic domain of F(1) is coupled via a rotary mechanism of the central stalk subunits to proton translocation. In terms of biological role, key component of the F(0) channel; it plays a direct role in translocation across the membrane. A homomeric c-ring of between 10-14 subunits forms the central stalk rotor element with the F(1) delta and epsilon subunits. The protein is ATP synthase subunit c, chloroplastic of Pinus koraiensis (Korean pine).